The chain runs to 199 residues: ATP-dependent Clp protease proteolytic subunit (199 aa).

Serine 103 serves as the catalytic Nucleophile. Histidine 128 is a catalytic residue.

This sequence belongs to the peptidase S14 family. In terms of assembly, fourteen ClpP subunits assemble into 2 heptameric rings which stack back to back to give a disk-like structure with a central cavity, resembling the structure of eukaryotic proteasomes.

The protein localises to the cytoplasm. The enzyme catalyses Hydrolysis of proteins to small peptides in the presence of ATP and magnesium. alpha-casein is the usual test substrate. In the absence of ATP, only oligopeptides shorter than five residues are hydrolyzed (such as succinyl-Leu-Tyr-|-NHMec, and Leu-Tyr-Leu-|-Tyr-Trp, in which cleavage of the -Tyr-|-Leu- and -Tyr-|-Trp bonds also occurs).. Cleaves peptides in various proteins in a process that requires ATP hydrolysis. Has a chymotrypsin-like activity. Plays a major role in the degradation of misfolded proteins. The polypeptide is ATP-dependent Clp protease proteolytic subunit (Photobacterium profundum (strain SS9)).